Reading from the N-terminus, the 381-residue chain is Dihydroorotate dehydrogenase (quinone) (381 aa).

Residues 77 to 81 (AGCDK) and alanine 101 each bind FMN. Lysine 81 lines the substrate pocket. A substrate-binding site is contributed by 126 to 129 (NRLG). FMN-binding residues include asparagine 158 and asparagine 191. Asparagine 191 contacts substrate. The active-site Nucleophile is serine 194. Asparagine 196 contributes to the substrate binding site. FMN is bound by residues lysine 229 and threonine 257. 258–259 (NT) provides a ligand contact to substrate. FMN is bound by residues glycine 287, glycine 316, and 337-338 (YT).

The protein belongs to the dihydroorotate dehydrogenase family. Type 2 subfamily. In terms of assembly, monomer. Requires FMN as cofactor.

It localises to the cell membrane. The enzyme catalyses (S)-dihydroorotate + a quinone = orotate + a quinol. It functions in the pathway pyrimidine metabolism; UMP biosynthesis via de novo pathway; orotate from (S)-dihydroorotate (quinone route): step 1/1. Its function is as follows. Catalyzes the conversion of dihydroorotate to orotate with quinone as electron acceptor. This chain is Dihydroorotate dehydrogenase (quinone) (pyrD), found in Synechocystis sp. (strain ATCC 27184 / PCC 6803 / Kazusa).